A 410-amino-acid chain; its full sequence is Multifunctional CCA protein (410 aa).

Residues Gly8 and Arg11 each coordinate ATP. CTP contacts are provided by Gly8 and Arg11. Mg(2+) contacts are provided by Asp21 and Asp23. 3 residues coordinate ATP: Arg91, Arg138, and Arg141. Residues Arg91, Arg138, and Arg141 each coordinate CTP. The 119-residue stretch at 229–347 folds into the HD domain; it reads TGIHQEMVSD…AQLALVCEAD (119 aa).

Belongs to the tRNA nucleotidyltransferase/poly(A) polymerase family. Bacterial CCA-adding enzyme type 1 subfamily. In terms of assembly, monomer. Can also form homodimers and oligomers. The cofactor is Mg(2+). Ni(2+) is required as a cofactor.

It catalyses the reaction a tRNA precursor + 2 CTP + ATP = a tRNA with a 3' CCA end + 3 diphosphate. The catalysed reaction is a tRNA with a 3' CCA end + 2 CTP + ATP = a tRNA with a 3' CCACCA end + 3 diphosphate. Functionally, catalyzes the addition and repair of the essential 3'-terminal CCA sequence in tRNAs without using a nucleic acid template. Adds these three nucleotides in the order of C, C, and A to the tRNA nucleotide-73, using CTP and ATP as substrates and producing inorganic pyrophosphate. tRNA 3'-terminal CCA addition is required both for tRNA processing and repair. Also involved in tRNA surveillance by mediating tandem CCA addition to generate a CCACCA at the 3' terminus of unstable tRNAs. While stable tRNAs receive only 3'-terminal CCA, unstable tRNAs are marked with CCACCA and rapidly degraded. This chain is Multifunctional CCA protein, found in Xanthomonas axonopodis pv. citri (strain 306).